A 253-amino-acid chain; its full sequence is 5'/3'-nucleotidase SurE (253 aa).

A divalent metal cation is bound by residues Asp-8, Asp-9, Ser-39, and Asn-92.

This sequence belongs to the SurE nucleotidase family. A divalent metal cation serves as cofactor.

The protein localises to the cytoplasm. The catalysed reaction is a ribonucleoside 5'-phosphate + H2O = a ribonucleoside + phosphate. It catalyses the reaction a ribonucleoside 3'-phosphate + H2O = a ribonucleoside + phosphate. The enzyme catalyses [phosphate](n) + H2O = [phosphate](n-1) + phosphate + H(+). In terms of biological role, nucleotidase with a broad substrate specificity as it can dephosphorylate various ribo- and deoxyribonucleoside 5'-monophosphates and ribonucleoside 3'-monophosphates with highest affinity to 3'-AMP. Also hydrolyzes polyphosphate (exopolyphosphatase activity) with the preference for short-chain-length substrates (P20-25). Might be involved in the regulation of dNTP and NTP pools, and in the turnover of 3'-mononucleotides produced by numerous intracellular RNases (T1, T2, and F) during the degradation of various RNAs. This chain is 5'/3'-nucleotidase SurE, found in Serratia proteamaculans (strain 568).